A 443-amino-acid polypeptide reads, in one-letter code: Thymidine phosphorylase (443 aa).

This sequence belongs to the thymidine/pyrimidine-nucleoside phosphorylase family. In terms of assembly, homodimer.

The enzyme catalyses thymidine + phosphate = 2-deoxy-alpha-D-ribose 1-phosphate + thymine. It functions in the pathway pyrimidine metabolism; dTMP biosynthesis via salvage pathway; dTMP from thymine: step 1/2. Its function is as follows. The enzymes which catalyze the reversible phosphorolysis of pyrimidine nucleosides are involved in the degradation of these compounds and in their utilization as carbon and energy sources, or in the rescue of pyrimidine bases for nucleotide synthesis. This Aeromonas hydrophila subsp. hydrophila (strain ATCC 7966 / DSM 30187 / BCRC 13018 / CCUG 14551 / JCM 1027 / KCTC 2358 / NCIMB 9240 / NCTC 8049) protein is Thymidine phosphorylase.